Reading from the N-terminus, the 234-residue chain is Sugar fermentation stimulation protein homolog (234 aa).

It belongs to the SfsA family.

The protein is Sugar fermentation stimulation protein homolog of Photobacterium profundum (strain SS9).